The chain runs to 252 residues: tRNA pseudouridine synthase A (252 aa).

The Nucleophile role is filled by Asp52. Tyr110 is a binding site for substrate.

It belongs to the tRNA pseudouridine synthase TruA family. As to quaternary structure, homodimer.

The enzyme catalyses uridine(38/39/40) in tRNA = pseudouridine(38/39/40) in tRNA. Formation of pseudouridine at positions 38, 39 and 40 in the anticodon stem and loop of transfer RNAs. The protein is tRNA pseudouridine synthase A of Blochmanniella floridana.